Here is a 244-residue protein sequence, read N- to C-terminus: Orotidine 5'-phosphate decarboxylase (244 aa).

Residues Asp20, Lys42, 70–79, Thr125, Arg186, Gln195, Gly215, and Arg216 each bind substrate; that span reads DLKFFDIPAT. The active-site Proton donor is Lys72.

This sequence belongs to the OMP decarboxylase family. Type 1 subfamily. As to quaternary structure, homodimer.

The catalysed reaction is orotidine 5'-phosphate + H(+) = UMP + CO2. It participates in pyrimidine metabolism; UMP biosynthesis via de novo pathway; UMP from orotate: step 2/2. Functionally, catalyzes the decarboxylation of orotidine 5'-monophosphate (OMP) to uridine 5'-monophosphate (UMP). This is Orotidine 5'-phosphate decarboxylase from Xylella fastidiosa (strain M12).